The following is a 559-amino-acid chain: Large neutral amino acids transporter small subunit 3 (559 aa).

A helical transmembrane segment spans residues 20 to 40 (VLENLFFSAVLLGWGSLLIIL). A glycan (N-linked (GlcNAc...) asparagine) is linked at Asn57. The next 5 membrane-spanning stretches (helical) occupy residues 78-98 (LGFT…GILM), 105-124 (PVRL…MALA), 131-151 (LSPL…CLTF), 168-188 (MALM…IKLI), and 191-211 (AGVA…LIFL). N-linked (GlcNAc...) asparagine glycosylation is found at Asn212 and Asn229. Ser237, Ser262, and Ser267 each carry phosphoserine. 6 helical membrane-spanning segments follow: residues 304–324 (FLWS…YMAA), 357–377 (SVFG…GYIM), 419–439 (AISA…TCLI), 446–466 (FVTF…CGSL), 485–505 (LISA…VGPL), and 510–530 (FWVN…PSYL).

This sequence belongs to the SLC43A transporter (TC 2.A.1.44) family. In terms of tissue distribution, ubiquitously expressed in fetus and adult. Highest expression in adult pancreas, liver, skeletal muscle. In fetus, highest expression in liver and lower levels in kidney, and lung. Exclusively expressed in the glomeruli along the glomerular capillary walls.

It is found in the cell membrane. The protein localises to the apical cell membrane. Its subcellular location is the endoplasmic reticulum membrane. It catalyses the reaction D-leucine(in) = D-leucine(out). The enzyme catalyses L-leucine(in) = L-leucine(out). It carries out the reaction L-isoleucine(in) = L-isoleucine(out). The catalysed reaction is L-methionine(in) = L-methionine(out). It catalyses the reaction L-phenylalanine(in) = L-phenylalanine(out). The enzyme catalyses L-valine(in) = L-valine(out). Uniport that mediates the transport of neutral amino acids such as L-leucine, L-isoleucine, L-valine, and L-phenylalanine. The transport activity is sodium ions-independent, electroneutral and mediated by a facilitated diffusion. The polypeptide is Large neutral amino acids transporter small subunit 3 (Homo sapiens (Human)).